Here is a 357-residue protein sequence, read N- to C-terminus: Cyclic AMP-responsive element-binding protein 5 (357 aa).

A disordered region spans residues 114–239 (RQDQTPHHHL…FLERNRAAAT (126 aa)). Composition is skewed to basic residues over residues 120-129 (HHHLHSHPHQ) and 138-175 (PYPH…HPAH). Polar residues predominate over residues 186–195 (TGNQAQVSPA). Residues 196–206 (TQQMQPTQTIQ) show a composition bias toward low complexity. Residues 218–235 (VVDEDPDERRRKFLERNR) are compositionally biased toward basic and acidic residues. The bZIP domain occupies 224–287 (DERRRKFLER…AQLKQLLLTH (64 aa)). Residues 226 to 246 (RRRKFLERNRAAATRCRQKRK) form a basic motif region. Positions 252-280 (LEKKAEELTQTNMQLQNEVSMLKNEVAQL) are leucine-zipper. A disordered region spans residues 298 to 318 (ESQGYLSPESSPPASPVPACS).

This sequence belongs to the bZIP family. In terms of assembly, binds DNA as a homodimer or as a heterodimer with JUN or ATF2/CREBP1.

Its subcellular location is the nucleus. Binds to the cAMP response element and activates transcription. The chain is Cyclic AMP-responsive element-binding protein 5 (Creb5) from Mus musculus (Mouse).